The chain runs to 295 residues: Cytidine deaminase (295 aa).

2 consecutive CMP/dCMP-type deaminase domains span residues 48-168 (SDKE…FGPA) and 187-295 (DDKD…FVNV). Position 89–91 (89–91 (NME)) interacts with substrate. Zn(2+) is bound at residue H102. Catalysis depends on E104, which acts as the Proton donor. 2 residues coordinate Zn(2+): C129 and C132.

This sequence belongs to the cytidine and deoxycytidylate deaminase family. In terms of assembly, homodimer. Requires Zn(2+) as cofactor.

It carries out the reaction cytidine + H2O + H(+) = uridine + NH4(+). The enzyme catalyses 2'-deoxycytidine + H2O + H(+) = 2'-deoxyuridine + NH4(+). Functionally, this enzyme scavenges exogenous and endogenous cytidine and 2'-deoxycytidine for UMP synthesis. The sequence is that of Cytidine deaminase from Vibrio parahaemolyticus serotype O3:K6 (strain RIMD 2210633).